Reading from the N-terminus, the 246-residue chain is MQWSDEGLVLGARRHGETSVVLELMTAGHGRHLGLVHGGRSRRMQPVLQPGNRVRAVWRARLDEGLGHFAVEPIESAAGRLMGSRLALYGLAHAAALLRLLPERDPHPSLYAAAQVLVAHLTDPAIAPALMVRFELAVLADLGFGLDLSACAATGSNAYLAYVSPKSGRAVSAAAGEPWRDRLLALPDFLVAREAGGTGATPTPRDVRQGFTLTGYFLDQHVWHPRGVAPPEARELFVALGTADAG.

It belongs to the RecO family.

Involved in DNA repair and RecF pathway recombination. This chain is DNA repair protein RecO, found in Methylobacterium nodulans (strain LMG 21967 / CNCM I-2342 / ORS 2060).